The primary structure comprises 625 residues: Mesothelin (625 aa).

The first 35 residues, 1–35 (MALPTARPLLGSCGSPICSRSFLLLLLSLGWIPRL), serve as a signal peptide directing secretion. The N-linked (GlcNAc...) asparagine glycan is linked to Asn93. Ser202 bears the Phosphoserine mark. An intrachain disulfide couples Cys304 to Cys328. Residues Asn390, Asn488, and Asn517 are each glycosylated (N-linked (GlcNAc...) asparagine). A lipid anchor (GPI-anchor amidated serine) is attached at Ser600. A propeptide spans 601 to 625 (SRASLLGPGFVLIWIPALLPALRLS) (removed in mature form).

The protein belongs to the mesothelin family. Interacts with MUC16. Post-translationally, proteolytically cleaved by a furin-like convertase to generate megakaryocyte-potentiating factor (MPF), and the cleaved form of mesothelin. As to expression, highly expressed in lung and heart. Expressed at low levels in spleen, liver, kidney and testis. Present in lung (at protein level).

It is found in the cell membrane. The protein resides in the golgi apparatus. The protein localises to the secreted. Membrane-anchored forms may play a role in cellular adhesion. In terms of biological role, megakaryocyte-potentiating factor (MPF) may potentiate megakaryocyte colony formation. The chain is Mesothelin (Msln) from Mus musculus (Mouse).